Here is a 238-residue protein sequence, read N- to C-terminus: N-methyltransferase vrtF (238 aa).

This sequence belongs to the methyltransferase superfamily.

The protein operates within secondary metabolite biosynthesis; terpenoid biosynthesis. Its function is as follows. N-methyltransferase; part of the gene cluster that mediates the biosynthesis of viridicatumtoxin, a tetracycline-like fungal meroterpenoid with a unique, fused spirobicyclic ring system. The first step of the pathway is the production of the malonamoyl-CoA starter unit for the polyketide synthase vrtA. The aldolase vrtJ may be involved in the synthesis of the malonamate substrate for malonamoyl-CoA synthetase vrtB. The polyketide synthase vrtA then may utilize the malonamoyl-CoA starter unit, followed by sequential condensation of eight malonyl-CoA units to form the polyketide backbone. The cyclization of the last ring could be mediated by the lactamase-like protein vrtG. The proposed post-PKS tailoring steps are a hydroxylation at C5 catalyzed the cytochrome P450 monooxygenase vrtE, a hydroxylation at C12a catalyzed by VrtH and/or VrtI, and an O-methylation by the O-methyltransferase vrtF. VrtC is then proposed to catalyze the transfer of a geranyl group synthesized by vrtD to the aromatic C ring of the tetracyclic polyketide intermediate of viridicatumtoxin to yield previridicatumtoxin. Finally, the cytochrome P450 monooxygenase vrtK catalyzes the spirocyclization of the geranyl moiety of previridicatumtoxin to afford viridicatumtoxin. In Penicillium aethiopicum, this protein is N-methyltransferase vrtF.